Reading from the N-terminus, the 244-residue chain is Small ribosomal subunit protein uS3 (244 aa).

Residues 39 to 107 (VREMLRKKLA…PAHINVTEVR (69 aa)) enclose the KH type-2 domain. Residues 213–244 (VGQEKQDDSPRNDRNDRGDRGDRPSRPAREAR) form a disordered region. The span at 216 to 244 (EKQDDSPRNDRNDRGDRGDRPSRPAREAR) shows a compositional bias: basic and acidic residues.

The protein belongs to the universal ribosomal protein uS3 family. In terms of assembly, part of the 30S ribosomal subunit. Forms a tight complex with proteins S10 and S14.

Binds the lower part of the 30S subunit head. Binds mRNA in the 70S ribosome, positioning it for translation. This is Small ribosomal subunit protein uS3 from Xanthomonas campestris pv. campestris (strain 8004).